Reading from the N-terminus, the 228-residue chain is Ankyrin repeat domain-containing protein 46 (228 aa).

4 ANK repeats span residues 11-40 (QTSVPLLQACIDGDLSFARRLLETGCDPNI), 44-73 (RGRTGLHLAAARGNVDICRFLHKFGADLLA), 77-103 (QGNTALHLCGHVDTIQFLVSNGLKIDI), and 107-138 (NGSTPLVLAKRRGVNKDAIRLLEGLEEQEVKG). A helical transmembrane segment spans residues 195–215 (VLLLLVVIALLSLGIAYYVSG).

It is found in the membrane. The chain is Ankyrin repeat domain-containing protein 46 (ankrd46) from Danio rerio (Zebrafish).